Consider the following 196-residue polypeptide: uncharacterized protein (196 aa).

The Macro domain maps to Met1–Gly183.

It belongs to the MacroD-type family.

This is an uncharacterized protein from Thermoplasma acidophilum (strain ATCC 25905 / DSM 1728 / JCM 9062 / NBRC 15155 / AMRC-C165).